The sequence spans 392 residues: MTLLGTALRPAATRVMLLGSGELGKEVAIECQRLGVEVIAVDRYADAPAMHVAHRSHVINMLDGDALRRVVELEKPHYIVPEIEAIATDMLIQLEEEGLNVVPCARATKLTMNREGIRRLAAEELQLPTSTYRFADSENLFREAVAAIGYPCIVKPVMSSSGKGQTFIRSAEQLAHAWEYAQQGGRAGAGRVIVEGVVKFDFEITLLTVSAVDGVHFCAPVGHRQEDGDYRESWQPQQMSPLALERAQEIARKVVLALGGYGLFGVELFVCGDEVIFSEVSPRPHDTGMVTLISQDLSEFALHVRAFLGLPVGGIRQYGPAASAVILPQLTSQNVTFDNVQNAVGADLQIRLFGKPEIDGSRRLGVALATAESVVDAIERAKHAAGQVKVQG.

N(1)-(5-phospho-beta-D-ribosyl)glycinamide contacts are provided by residues 22-23 (EL) and E82. ATP contacts are provided by residues R114, K155, 160–165 (SSGKGQ), 195–198 (EGVV), and E203. Positions 119–308 (RLAAEELQLP…EFALHVRAFL (190 aa)) constitute an ATP-grasp domain. Mg(2+) is bound by residues E267 and E279. N(1)-(5-phospho-beta-D-ribosyl)glycinamide is bound by residues D286, K355, and 362–363 (RR).

Belongs to the PurK/PurT family. In terms of assembly, homodimer.

The enzyme catalyses N(1)-(5-phospho-beta-D-ribosyl)glycinamide + formate + ATP = N(2)-formyl-N(1)-(5-phospho-beta-D-ribosyl)glycinamide + ADP + phosphate + H(+). The protein operates within purine metabolism; IMP biosynthesis via de novo pathway; N(2)-formyl-N(1)-(5-phospho-D-ribosyl)glycinamide from N(1)-(5-phospho-D-ribosyl)glycinamide (formate route): step 1/1. In terms of biological role, involved in the de novo purine biosynthesis. Catalyzes the transfer of formate to 5-phospho-ribosyl-glycinamide (GAR), producing 5-phospho-ribosyl-N-formylglycinamide (FGAR). Formate is provided by PurU via hydrolysis of 10-formyl-tetrahydrofolate. The polypeptide is Formate-dependent phosphoribosylglycinamide formyltransferase (Escherichia coli O1:K1 / APEC).